An 80-amino-acid chain; its full sequence is Exodeoxyribonuclease 7 small subunit (80 aa).

The protein belongs to the XseB family. As to quaternary structure, heterooligomer composed of large and small subunits.

The protein resides in the cytoplasm. It carries out the reaction Exonucleolytic cleavage in either 5'- to 3'- or 3'- to 5'-direction to yield nucleoside 5'-phosphates.. Its function is as follows. Bidirectionally degrades single-stranded DNA into large acid-insoluble oligonucleotides, which are then degraded further into small acid-soluble oligonucleotides. This is Exodeoxyribonuclease 7 small subunit from Klebsiella pneumoniae (strain 342).